The primary structure comprises 376 residues: Tetraacyldisaccharide 4'-kinase (376 aa).

51–58 (AVGGTGKT) contributes to the ATP binding site.

It belongs to the LpxK family.

It carries out the reaction a lipid A disaccharide + ATP = a lipid IVA + ADP + H(+). The protein operates within glycolipid biosynthesis; lipid IV(A) biosynthesis; lipid IV(A) from (3R)-3-hydroxytetradecanoyl-[acyl-carrier-protein] and UDP-N-acetyl-alpha-D-glucosamine: step 6/6. In terms of biological role, transfers the gamma-phosphate of ATP to the 4'-position of a tetraacyldisaccharide 1-phosphate intermediate (termed DS-1-P) to form tetraacyldisaccharide 1,4'-bis-phosphate (lipid IVA). The chain is Tetraacyldisaccharide 4'-kinase from Bacteroides fragilis (strain YCH46).